The following is a 92-amino-acid chain: SPbeta prophage-derived uncharacterized protein YoqM (92 aa).

A signal peptide spans 1–25 (MKLRKVLTGSVLSLGLLVSASPAFA).

The chain is SPbeta prophage-derived uncharacterized protein YoqM (yoqM) from Bacillus subtilis (strain 168).